The primary structure comprises 191 residues: Cell division protein SepF (191 aa).

A disordered region spans residues 150-191 (TSSSPEEASPSSVSPKNTPQYSVENNTAPEPAWGNSKLSAFS). The segment covering 151-164 (SSSPEEASPSSVSP) has biased composition (low complexity). The span at 165 to 177 (KNTPQYSVENNTA) shows a compositional bias: polar residues.

Belongs to the SepF family. Homodimer. Interacts with FtsZ.

The protein localises to the cytoplasm. Functionally, cell division protein that is part of the divisome complex and is recruited early to the Z-ring. Probably stimulates Z-ring formation, perhaps through the cross-linking of FtsZ protofilaments. Its function overlaps with FtsA. This chain is Cell division protein SepF, found in Prochlorococcus marinus (strain MIT 9312).